Here is a 488-residue protein sequence, read N- to C-terminus: Glutamyl-tRNA(Gln) amidotransferase subunit A (488 aa).

Residues Lys77 and Ser152 each act as charge relay system in the active site. Ser176 (acyl-ester intermediate) is an active-site residue.

The protein belongs to the amidase family. GatA subfamily. Heterotrimer of A, B and C subunits.

The enzyme catalyses L-glutamyl-tRNA(Gln) + L-glutamine + ATP + H2O = L-glutaminyl-tRNA(Gln) + L-glutamate + ADP + phosphate + H(+). Functionally, allows the formation of correctly charged Gln-tRNA(Gln) through the transamidation of misacylated Glu-tRNA(Gln) in organisms which lack glutaminyl-tRNA synthetase. The reaction takes place in the presence of glutamine and ATP through an activated gamma-phospho-Glu-tRNA(Gln). The polypeptide is Glutamyl-tRNA(Gln) amidotransferase subunit A (Streptococcus agalactiae serotype Ia (strain ATCC 27591 / A909 / CDC SS700)).